Consider the following 232-residue polypeptide: Phosphate import ATP-binding protein PstB (232 aa).

Positions 1 to 227 constitute an ABC transporter domain; that stretch reads MFNINMEIKE…PKDRRTENYI (227 aa). An ATP-binding site is contributed by 18–25; that stretch reads GPSGCGKT.

Belongs to the ABC transporter superfamily. Phosphate importer (TC 3.A.1.7) family. As to quaternary structure, the complex is composed of two ATP-binding proteins (PstB), two transmembrane proteins (PstC and PstA) and a solute-binding protein (PstS).

The protein localises to the cell membrane. The enzyme catalyses phosphate(out) + ATP + H2O = ADP + 2 phosphate(in) + H(+). Its function is as follows. Part of the ABC transporter complex PstSACB involved in phosphate import. Responsible for energy coupling to the transport system. The sequence is that of Phosphate import ATP-binding protein PstB from Mycoplasma mycoides subsp. mycoides SC (strain CCUG 32753 / NCTC 10114 / PG1).